The sequence spans 344 residues: Histone-lysine N-methyltransferase, H3 lysine-9 specific KMT1 (344 aa).

Positions 79–174 (SGCSCAKDSE…DCPNRVVERG (96 aa)) constitute a Pre-SET domain. Residues Cys-81, Cys-83, Cys-89, Cys-94, Cys-96, Cys-156, Cys-160, Cys-162, Cys-166, and Cys-272 each coordinate Zn(2+). The 136-residue stretch at 177–312 (IPLEIFRTPD…EGEELTFDYV (136 aa)) folds into the SET domain. Tyr-311 lines the S-adenosyl-L-methionine pocket. The Post-SET domain maps to 328–344 (HMTRCLCGSKKCRKFLW). Residues Cys-332, Cys-334, and Cys-339 each contribute to the Zn(2+) site.

The protein belongs to the class V-like SAM-binding methyltransferase superfamily.

The protein resides in the chromosome. It carries out the reaction L-lysyl(9)-[histone H3] + 3 S-adenosyl-L-methionine = N(6),N(6),N(6)-trimethyl-L-lysyl(9)-[histone H3] + 3 S-adenosyl-L-homocysteine + 3 H(+). Its function is as follows. Histone methyltransferase that specifically trimethylates histone H3 to form H3K9me3. H3K9me3 marks chromatin regions for DNA methylation. Plays a key role in the regulation of the biosynthesis of the gamma-pyrones fusapyrone (FPY) and deoxyfusapyrone (dFPY). This Fusarium mangiferae (Mango malformation disease fungus) protein is Histone-lysine N-methyltransferase, H3 lysine-9 specific KMT1.